The primary structure comprises 62 residues: Temporin-HN1 (62 aa).

The first 22 residues, 1–22 (MFTLKKSLLLLLFLGTINLSLS), serve as a signal peptide directing secretion. A propeptide spanning residues 23–44 (EQERNAEEERRDDPEEMDAEVE) is cleaved from the precursor. Residue Leu60 is modified to Leucine amide.

Expressed by the skin glands.

The protein localises to the secreted. Has antimicrobial activity against some Gram-positive bacteria and fungi but has no activity against a range of Gram-negative bacteria except P.faecalis. Active against the Gram-positive bacteria S.aureus ATCC 25923 (MIC=37.5 uM), S.carnosus KHS (MIC=37.5 uM), B.licheniformis X39 (MIC=19 uM), R.rhodochrous X15 (MIC=4.8 uM), is virtually inactive against E.faecalis 981 (MIC=150 uM) and inactive against E.faecium 091299. Has some antimicrobial activity against the Gram-negative bacterium P.faecalis X29 (MIC=75 uM) and is inactive against E.coli, P.aeruginosa and S.typhi. Has antifungal activity against C.albicans ATCC 2002 (MIC=19 uM) and lower activity against the slime mold 090223 (MIC=75 uM). Has low hemolytic activity against human erythrocytes (LC(50)=75 uM). This chain is Temporin-HN1, found in Odorrana hainanensis (Odor frog).